We begin with the raw amino-acid sequence, 1132 residues long: MTPSQWDLPVELCCRPMAFVTLTGLDVVYNAVHRAVWDAFCANRRADRVPISFKVLPGDHEYPKCRTKRTSYEWYIPKGILKTGWMNKHLNLVPALVVVFYELDWDEPQWKEKQSECATRVEIVRQSLQGRNTKVAVVLIQKKTPLPPGEDVIASERAAALCNACDLSGKSLFVLPHTDHLVGYIIRLENAFYEHAQTYYYTEIRRVKSHKEFLNKTTHQLLFVRHQFKIAFFSELKQDTQNALKNYRTAYNLVHELRAHETNMLEIKTMAGFINYKICRLCFQHNTPLDAIAQFRKHIDLCKKKIGSAELAFEHAAWMSKQFQAFGDLFDEAIKLGLTAIQTQNPGFYYQQAAYYAQERKQLASMLCNHDSSVVYPNPDPLETQTGVLDFYGQRPWRQGTLSFDLSDPEKEKMGILSLQLKERNVLHSELIITLLSNAVAQFKKYKCPRMKSHLMVQMGEEYYFAKDYAKALKLLDYVMCEYRSEGWWTLLTSILTTALKCSYLMAQIKDYITYSLELLGRASTLKDDQKSRIEKNLIKVLMNESPDPEPDCDAAAVKASQKLWSDRVSLAGSNVFTIEVQDFIPFVQCKAKFLAPSFHVDVPVQFDIYLRADCPHPIRFSKLCISFNNQDYNQYCVVEEAYQKSDILEQSSQGTMCLVPGKTRKFTFKFVAKTEDVGKKIEITSVDLILGSESGRCVILNWRGGGGDAASSQEALQAARSFRRRPKLPDNEVHWDSLAIQASTMIISRVPNISVQLRHEPPALTNEMYCLVVTIESHEETVAKDVKLTAGLKPGQDANLTQKTQVTLRGTDTCDDSFPALLPDIPVGDLQPGEKLEKPIYIRCGTVGARMFLVYVSYLINTTVEGKEILCKCHRDETVTIETVFPFDVAIKFVSTKLEHLDRVFADIPFLLMTDILSASPWPLTIVTSQLQLSASMTSVDQLESYVENVVLQTGESASECFCLRCPPVTNSGGVATGCYIISWKRSSPVESVPVVSTVITLPHVIVESIPLHVKADLPSFGRVRESLPVRYHLQNKTNLVQDVEVSMEPSDAFMFSGLKQIRLRILPGTQQEVLYNFYPLMAGYQQLPSLHINLLRFPNFTNQLLRRFIPTHIFVKPQGRQADENSIAAA.

Belongs to the TRAPPC11 family. In terms of assembly, component of the multisubunit TRAPP (transport protein particle) complex.

It is found in the golgi apparatus. Its subcellular location is the cis-Golgi network. Involved in endoplasmic reticulum to Golgi apparatus trafficking at a very early stage. The sequence is that of Trafficking protein particle complex subunit 11 (TRAPPC11) from Gallus gallus (Chicken).